Consider the following 119-residue polypeptide: uncharacterized protein (119 aa).

Residues 6 to 36 are a coiled coil; it reads QAYLDIQGKIAEFRREIKALRVEEKAITANL. The disordered stretch occupies residues 95–119; it reads AVTGSSSNVKIRKSAPARNEEDDDG.

This is an uncharacterized protein from Frog virus 3 (isolate Goorha) (FV-3).